Consider the following 373-residue polypeptide: tRNA N6-adenosine threonylcarbamoyltransferase (373 aa).

A divalent metal cation-binding residues include H128, H132, and Y149. Substrate contacts are provided by residues 149 to 153, D181, G196, E200, and N302; that span reads YVSGG. D331 is an a divalent metal cation binding site.

It belongs to the KAE1 / TsaD family. As to quaternary structure, component of the EKC/KEOPS complex composed of at least BUD32, CGI121, GON7, KAE1 and PCC1; the whole complex dimerizes. A divalent metal cation is required as a cofactor.

Its subcellular location is the cytoplasm. The protein resides in the nucleus. It carries out the reaction L-threonylcarbamoyladenylate + adenosine(37) in tRNA = N(6)-L-threonylcarbamoyladenosine(37) in tRNA + AMP + H(+). Component of the EKC/KEOPS complex that is required for the formation of a threonylcarbamoyl group on adenosine at position 37 (t(6)A37) in tRNAs that read codons beginning with adenine. The complex is probably involved in the transfer of the threonylcarbamoyl moiety of threonylcarbamoyl-AMP (TC-AMP) to the N6 group of A37. KAE1 likely plays a direct catalytic role in this reaction, but requires other protein(s) of the complex to fulfill this activity. The EKC/KEOPS complex also promotes both telomere uncapping and telomere elongation. The complex is required for efficient recruitment of transcriptional coactivators. This chain is tRNA N6-adenosine threonylcarbamoyltransferase, found in Candida glabrata (strain ATCC 2001 / BCRC 20586 / JCM 3761 / NBRC 0622 / NRRL Y-65 / CBS 138) (Yeast).